Reading from the N-terminus, the 504-residue chain is Zinc finger CCCH-type with G patch domain-containing protein (504 aa).

The tract at residues 95 to 121 is disordered; the sequence is LSEDSNEVKPNPDTDEENEEEEQDISG. Acidic residues predominate over residues 107 to 118; that stretch reads DTDEENEEEEQD. The segment at 165-191 adopts a C3H1-type zinc-finger fold; the sequence is KSMKPCGFYLEGKCRFMDNCRYSHGEV. The G-patch domain occupies 308–354; that stretch reads TRGIGSKLLMKMGYELGKGLGKTLSGRVEPVQAVVLPKGHSLDICAE.

The protein localises to the nucleus. Functionally, transcription repressor that specifically binds the 5'-GGAG[GA]A[GA]A-3' consensus sequence. Represses transcription by recruiting the chromatin multiprotein complex NuRD to target promoters. Negatively regulates expression of EGFR, a gene involved in cell proliferation, survival and migration. The polypeptide is Zinc finger CCCH-type with G patch domain-containing protein (zgpat) (Danio rerio (Zebrafish)).